The chain runs to 234 residues: 7-cyano-7-deazaguanine synthase (234 aa).

8–18 (FSGGQDSTTCA) is a binding site for ATP. The Zn(2+) site is built by cysteine 194, cysteine 202, cysteine 205, and cysteine 208.

It belongs to the QueC family. Zn(2+) serves as cofactor.

The catalysed reaction is 7-carboxy-7-deazaguanine + NH4(+) + ATP = 7-cyano-7-deazaguanine + ADP + phosphate + H2O + H(+). The protein operates within purine metabolism; 7-cyano-7-deazaguanine biosynthesis. In terms of biological role, catalyzes the ATP-dependent conversion of 7-carboxy-7-deazaguanine (CDG) to 7-cyano-7-deazaguanine (preQ(0)). The protein is 7-cyano-7-deazaguanine synthase of Gloeobacter violaceus (strain ATCC 29082 / PCC 7421).